The chain runs to 471 residues: Elongation factor 1-alpha (471 aa).

Residues 10-239 enclose the tr-type G domain; that stretch reads KPRLNACFIG…EALNYQDVPE (230 aa). Positions 19–26 are G1; it reads GHVDSGKS. 19 to 26 serves as a coordination point for GTP; that stretch reads GHVDSGKS. The G2 stretch occupies residues 75 to 79; the sequence is GITIT. The segment at 96 to 99 is G3; the sequence is DCPG. Residues 96-100 and 156-159 contribute to the GTP site; these read DCPGH and NKMD. The interval 156–159 is G4; sequence NKMD. The tract at residues 196 to 198 is G5; the sequence is SAF.

It belongs to the TRAFAC class translation factor GTPase superfamily. Classic translation factor GTPase family. EF-Tu/EF-1A subfamily. In terms of assembly, component of the eukaryotic elongation factor 1 complex (eEF1).

Its subcellular location is the cytoplasm. It functions in the pathway protein biosynthesis; polypeptide chain elongation. Its function is as follows. GTP-binding component of the eukaryotic elongation factor 1 complex (eEF1). In its active GTP-bound form, binds to and delivers aminoacyl-tRNA to the A-site of ribosomes during protein biosynthesis. In the presence of a correct codon-anticodon match between the aminoacyl-tRNA and the A-site codon of the ribosome-bound mRNA, the ribosome acts as a GTPase activator and the GTP is hydrolyzed. The inactive GDP-bound form leaves the ribosome and must be recycled by its guanine nucleotide exchange factor (GEF) (eEF1B subcomplex) before binding another molecule of aminoacyl-tRNA. Required for nuclear export of aminoacyl-tRNAs. May also be involved in translational quality control by targeting cotranslationally damaged proteins to the proteasome. The sequence is that of Elongation factor 1-alpha (TEF1) from Encephalitozoon cuniculi (strain GB-M1) (Microsporidian parasite).